A 114-amino-acid chain; its full sequence is UPF0102 protein jhp_0762 (114 aa).

The protein belongs to the UPF0102 family.

This chain is UPF0102 protein jhp_0762, found in Helicobacter pylori (strain J99 / ATCC 700824) (Campylobacter pylori J99).